The sequence spans 64 residues: Conotoxin Cal6.26 (64 aa).

The signal sequence occupies residues 1 to 22; it reads MKLTCVMIVAVLVLTVCKVVTS. Cystine bridges form between Cys-32–Cys-50, Cys-40–Cys-54, and Cys-49–Cys-60.

As to expression, expressed by the venom duct.

The protein localises to the secreted. Its function is as follows. Probable neurotoxin. This chain is Conotoxin Cal6.26, found in Californiconus californicus (California cone).